Reading from the N-terminus, the 271-residue chain is Ribosomal RNA small subunit methyltransferase A (271 aa).

S-adenosyl-L-methionine is bound by residues N19, L21, G46, E67, D92, and N114.

It belongs to the class I-like SAM-binding methyltransferase superfamily. rRNA adenine N(6)-methyltransferase family. RsmA subfamily.

The protein localises to the cytoplasm. The catalysed reaction is adenosine(1518)/adenosine(1519) in 16S rRNA + 4 S-adenosyl-L-methionine = N(6)-dimethyladenosine(1518)/N(6)-dimethyladenosine(1519) in 16S rRNA + 4 S-adenosyl-L-homocysteine + 4 H(+). Its function is as follows. Specifically dimethylates two adjacent adenosines (A1518 and A1519) in the loop of a conserved hairpin near the 3'-end of 16S rRNA in the 30S particle. May play a critical role in biogenesis of 30S subunits. This chain is Ribosomal RNA small subunit methyltransferase A, found in Aeromonas hydrophila subsp. hydrophila (strain ATCC 7966 / DSM 30187 / BCRC 13018 / CCUG 14551 / JCM 1027 / KCTC 2358 / NCIMB 9240 / NCTC 8049).